A 423-amino-acid polypeptide reads, in one-letter code: UPF0229 protein VP0986 (423 aa).

The segment at G69–Q112 is disordered. The segment covering G93–E102 has biased composition (gly residues).

This sequence belongs to the UPF0229 family.

This is UPF0229 protein VP0986 from Vibrio parahaemolyticus serotype O3:K6 (strain RIMD 2210633).